The following is a 535-amino-acid chain: UDP-glucuronosyltransferase 1A1 (535 aa).

A signal peptide spans 1 to 29; sequence MTVVCWSSRLLLLLPYLLLCVFGPSASHA. N-linked (GlcNAc...) asparagine glycans are attached at residues asparagine 89, asparagine 297, and asparagine 435. A helical transmembrane segment spans residues 493–509; that stretch reads VIGFLLAIVLTVVFIVF.

The protein belongs to the UDP-glycosyltransferase family. Homodimers. Homooligomer. Interacts with UGT1A3, UGT1A4, UGT1A6, UGT1A7, UGT1A8, UGT1A9 and UGT1A10 to form heterodimers. As to expression, highly expressed in liver and at lower levels in colon, kidney, stomach and intestine.

Its subcellular location is the endoplasmic reticulum membrane. The catalysed reaction is glucuronate acceptor + UDP-alpha-D-glucuronate = acceptor beta-D-glucuronoside + UDP + H(+). It catalyses the reaction 17beta-estradiol + UDP-alpha-D-glucuronate = 17beta-estradiol 3-O-(beta-D-glucuronate) + UDP + H(+). The enzyme catalyses 2-hydroxyestrone + UDP-alpha-D-glucuronate = 2-hydroxyestrone 3-O-(beta-D-glucuronate) + UDP + H(+). It carries out the reaction 2-hydroxy-17beta-estradiol + UDP-alpha-D-glucuronate = 2-hydroxy-17beta-estradiol 3-O-(beta-D-glucuronate) + UDP + H(+). The catalysed reaction is 2-methoxy-17beta-estradiol + UDP-alpha-D-glucuronate = 2-methoxy-17beta-estradiol 3-O-(beta-D-glucuronate) + UDP + H(+). It catalyses the reaction 17alpha-estradiol + UDP-alpha-D-glucuronate = 17alpha-estradiol 3-O-(beta-D-glucuronate) + UDP + H(+). The enzyme catalyses 16beta,17beta-estriol + UDP-alpha-D-glucuronate = 16beta,17beta-estriol 16-O-(beta-D-glucuronate) + UDP + H(+). It carries out the reaction losartan + UDP-alpha-D-glucuronate = losartan-2-N-beta-D-glucuronide + UDP. The catalysed reaction is prunetin + UDP-alpha-D-glucuronate = prunetin-4'-O-beta-D-glucuronide + UDP. It catalyses the reaction SN-38 + UDP-alpha-D-glucuronate = SN-38 O-beta-D-glucuronide + UDP + H(+). The enzyme catalyses (4Z,15Z)-bilirubin IXalpha + UDP-alpha-D-glucuronate = (4Z,15Z)-bilirubin IXalpha C12-beta-D-glucuronoside + UDP. It carries out the reaction (4Z,15Z)-bilirubin IXalpha + UDP-alpha-D-glucuronate = (4Z,15Z)-bilirubin IXalpha C8-beta-D-glucuronoside + UDP. The catalysed reaction is (4Z,15Z)-bilirubin IXalpha C8-beta-D-glucuronoside + UDP-alpha-D-glucuronate = (4Z,15Z)-bilirubin IXalpha C8,C12-beta-D-bisglucuronoside + UDP. It catalyses the reaction (4Z,15Z)-bilirubin IXalpha C12-beta-D-glucuronoside + UDP-alpha-D-glucuronate = (4Z,15Z)-bilirubin IXalpha C8,C12-beta-D-bisglucuronoside + UDP. The enzyme catalyses 8-iso-prostaglandin F2alpha + UDP-alpha-D-glucuronate = 8-iso-prostaglandin F2alpha-glucuronide + UDP + H(+). It carries out the reaction (5Z,8Z,11Z,14Z)-eicosatetraenoate + UDP-alpha-D-glucuronate = O-[(5Z),(8Z),(11Z),(14Z)-eicosatetraenoyl]-beta-D-glucuronate + UDP. The catalysed reaction is 15-hydroxy-(5Z,8Z,11Z,13E)-eicosatetraenoate + UDP-alpha-D-glucuronate = 15-O-(beta-D-glucuronosyl)-(5Z,8Z,11Z,14Z)-eicosatetraenoate + UDP + H(+). It catalyses the reaction 20-hydroxy-(5Z,8Z,11Z,14Z)-eicosatetraenoate + UDP-alpha-D-glucuronate = 20-O-(beta-D-glucuronosyl)-(5Z,8Z,11Z,14Z)-eicosatetraenoate + UDP + H(+). The enzyme catalyses prostaglandin B1 + UDP-alpha-D-glucuronate = 15-O-(beta-D-glucuronosyl)-prostaglandin B1 + UDP + H(+). It carries out the reaction (E)-ferulate + UDP-alpha-D-glucuronate = (E)-4-O-(beta-D-glucuronosyl)-ferulate + UDP + H(+). The catalysed reaction is (E)-ferulate + UDP-alpha-D-glucuronate = (E)-ferulic acid beta-D-glucuronate ester + UDP. UDP-glucuronosyltransferase (UGT) that catalyzes phase II biotransformation reactions in which lipophilic substrates are conjugated with glucuronic acid to increase the metabolite's water solubility, thereby facilitating excretion into either the urine or bile. Essential for the elimination and detoxification of drugs, xenobiotics and endogenous compounds. Catalyzes the glucuronidation of endogenous estrogen hormones such as estradiol, estrone and estriol. Involved in the glucuronidation of bilirubin, a degradation product occurring in the normal catabolic pathway that breaks down heme in vertebrates. Involved in the glucuronidation of arachidonic acid (AA) and AA-derived eicosanoids including 15-HETE, 20-HETE, PGB1 and F2-isoprostane (8-iso-PGF2alpha). Involved in the glucuronidation of the phytochemical ferulic acid at the phenolic or the carboxylic acid group. Also catalyzes the glucuronidation the isoflavones genistein, daidzein, glycitein, formononetin, biochanin A and prunetin, which are phytoestrogens with anticancer and cardiovascular properties. Involved in the glucuronidation of the AGTR1 angiotensin receptor antagonist losartan, a drug which can inhibit the effect of angiotensin II. Involved in the biotransformation of 7-ethyl-10-hydroxycamptothecin (SN-38), the pharmacologically active metabolite of the anticancer drug irinotecan. This chain is UDP-glucuronosyltransferase 1A1, found in Mus musculus (Mouse).